A 141-amino-acid chain; its full sequence is Large ribosomal subunit protein uL11 (141 aa).

This sequence belongs to the universal ribosomal protein uL11 family. Part of the ribosomal stalk of the 50S ribosomal subunit. Interacts with L10 and the large rRNA to form the base of the stalk. L10 forms an elongated spine to which L12 dimers bind in a sequential fashion forming a multimeric L10(L12)X complex. In terms of processing, one or more lysine residues are methylated.

In terms of biological role, forms part of the ribosomal stalk which helps the ribosome interact with GTP-bound translation factors. The protein is Large ribosomal subunit protein uL11 of Chlamydia abortus (strain DSM 27085 / S26/3) (Chlamydophila abortus).